The sequence spans 436 residues: Xylose isomerase (436 aa).

Active-site residues include His100 and Asp103. Mg(2+)-binding residues include Glu231, Glu267, His270, Asp295, Asp306, Asp308, and Asp338.

It belongs to the xylose isomerase family. As to quaternary structure, homotetramer. Mg(2+) is required as a cofactor.

Its subcellular location is the cytoplasm. It carries out the reaction alpha-D-xylose = alpha-D-xylulofuranose. The protein is Xylose isomerase of Rhizobium etli (strain ATCC 51251 / DSM 11541 / JCM 21823 / NBRC 15573 / CFN 42).